The sequence spans 153 residues: Gamma-glutamylaminecyclotransferase (153 aa).

7-10 (YGTL) lines the substrate pocket. The active-site Proton acceptor is the Glu82. Residues 130–153 (QLPHHDSYDSEGPHGLRYNPRENR) form a disordered region. The segment covering 132–153 (PHHDSYDSEGPHGLRYNPRENR) has biased composition (basic and acidic residues).

The protein belongs to the gamma-glutamylcyclotransferase family. In terms of assembly, monomer.

It carries out the reaction epsilon-(gamma-L-glutamyl)-L-lysine = 5-oxo-L-proline + L-lysine. Functionally, contributes to degradation of proteins cross-linked by transglutaminases by degrading the cross-link between a lysine and a glutamic acid residue. Catalyzes the formation of 5-oxo-L-proline from L-gamma-glutamyl-L-epsilon-lysine. Inactive with L-gamma-glutamyl-alpha-amino acid substrates such as L-gamma-glutamyl-L-alpha-cysteine and L-gamma-glutamyl-L-alpha-alanine. In Homo sapiens (Human), this protein is Gamma-glutamylaminecyclotransferase (GGACT).